The chain runs to 162 residues: Probable chemoreceptor glutamine deamidase CheD (162 aa).

Belongs to the CheD family.

It catalyses the reaction L-glutaminyl-[protein] + H2O = L-glutamyl-[protein] + NH4(+). Its function is as follows. Probably deamidates glutamine residues to glutamate on methyl-accepting chemotaxis receptors (MCPs), playing an important role in chemotaxis. The sequence is that of Probable chemoreceptor glutamine deamidase CheD from Syntrophotalea carbinolica (strain DSM 2380 / NBRC 103641 / GraBd1) (Pelobacter carbinolicus).